We begin with the raw amino-acid sequence, 591 residues long: Probable lysosomal cobalamin transporter (591 aa).

Transmembrane regions (helical) follow at residues 8–28 (LIWV…STFV), 39–59 (AAVT…VLLI), 95–115 (IVYY…IPFT), 144–164 (WTLG…FVPF), and 198–218 (FLIT…MALL). The segment at 238 to 266 (TASQLETNRERQRQLEGRNEGREGGLDSR) is disordered. Residues 244 to 266 (TNRERQRQLEGRNEGREGGLDSR) are compositionally biased toward basic and acidic residues. 4 helical membrane-spanning segments follow: residues 315 to 335 (LIGG…MLIT), 378 to 398 (VLFL…IATA), 422 to 442 (MATV…AMVV), and 509 to 529 (FFGI…LIVF).

This sequence belongs to the LIMR family. LMBRD1 subfamily.

The protein localises to the lysosome membrane. Probable lysosomal cobalamin transporter. Required to export cobalamin from lysosomes allowing its conversion to cofactors. The polypeptide is Probable lysosomal cobalamin transporter (Pyrenophora tritici-repentis (strain Pt-1C-BFP) (Wheat tan spot fungus)).